The following is a 113-amino-acid chain: UPF0482 protein YnfB (113 aa).

An N-terminal signal peptide occupies residues 1 to 28; sequence MKITLSKRIDLLAFLLPCALALSTTVHA.

Belongs to the UPF0482 family.

This Escherichia coli O157:H7 protein is UPF0482 protein YnfB.